A 341-amino-acid chain; its full sequence is KH domain-containing RNA-binding protein qki.S (341 aa).

The 67-residue stretch at 88-154 (YVPVKEYPDF…WEHLNEDLHV (67 aa)) folds into the KH domain. The Nuclear localization signal signature appears at 324–330 (RVHPYQR).

Belongs to the quaking family. Homodimer; does not require RNA to homodimerize.

The protein resides in the nucleus. Its subcellular location is the cytoplasm. In terms of biological role, RNA reader protein, which recognizes and binds specific RNAs, thereby regulating RNA metabolic processes, such as pre-mRNA splicing, circular RNA (circRNA) formation, mRNA export, mRNA stability and/or translation. Involved in various cellular processes, such as mRNA storage into stress granules, apoptosis, interferon response, glial cell fate and development. Binds to the 5'-NACUAAY-N(1,20)-UAAY-3' RNA core sequence. Acts as a mRNA modification reader that specifically recognizes and binds mRNA transcripts modified by internal N(7)-methylguanine (m7G). Promotes the formation of circular RNAs (circRNAs): acts by binding to sites flanking circRNA-forming exons. CircRNAs are produced by back-splicing circularization of pre-mRNAs. Required to protect and promote stability of mRNAs which promotes oligodendrocyte differentiation. Acts as an important regulator of muscle development. Essential for notochord development. The chain is KH domain-containing RNA-binding protein qki.S from Xenopus laevis (African clawed frog).